Here is a 911-residue protein sequence, read N- to C-terminus: Band 3 anion transport protein (911 aa).

Residue Met1 is modified to N-acetylmethionine. A compositionally biased stretch (acidic residues) spans 1–26 (MEELQDDYEDMMEENLEQEEYEDPDI). The interval 1 to 40 (MEELQDDYEDMMEENLEQEEYEDPDIPESQMEEPAAHDTE) is disordered. The Cytoplasmic segment spans residues 1–403 (MEELQDDYED…LSDITDAFSP (403 aa)). Phosphotyrosine is present on residues Tyr8, Tyr21, and Tyr46. The interval 13–31 (EENLEQEEYEDPDIPESQM) is (Microbial infection) Interaction with P.falciparum (isolate K1) FBPA. Residues 55–290 (HKVYVELQEL…LGRAAATLMS (236 aa)) form a globular region. Residues 176–185 (AVLTRSGDPS) are interaction with ANK1. Ser185 and Ser350 each carry phosphoserine. The interval 304 to 357 (RGELLHSLEGFLDCSLVLPPTDAPSEQALLSLVPVQRELLRRRYQSSPAKPDSS) is dimerization arm. Phosphotyrosine is present on Tyr359. A helical transmembrane segment spans residues 404–427 (QVLAAVIFIYFAALSPAITFGGLL). The Extracellular portion of the chain corresponds to 428–435 (GEKTRNQM). Residues 436-456 (GVSELLISTAVQGILFALLGA) form a helical membrane-spanning segment. The Cytoplasmic segment spans residues 457–459 (QPL). The chain crosses the membrane as a discontinuously helical span at residues 460–476 (LVVGFSGPLLVFEEAFF). Residues 477 to 485 (SFCETNGLE) are Extracellular-facing. Residues 486-506 (YIVGRVWIGFWLILLVVLVVA) traverse the membrane as a helical segment. The Cytoplasmic portion of the chain corresponds to 507-518 (FEGSFLVRFISR). Residues 519-541 (YTQEIFSFLISLIFIYETFSKLI) traverse the membrane as a helical segment. Topologically, residues 542-570 (KIFQDHPLQKTYNYNVLMVPKPQGPLPNT) are extracellular. The tract at residues 559–630 (MVPKPQGPLP…DFFIQDTYTQ (72 aa)) is involved in anion transport. Residues 571 to 591 (ALLSLVLMAGTFFFAMMLRKF) form a helical membrane-spanning segment. Topologically, residues 592-602 (KNSSYFPGKLR) are cytoplasmic. Residues 603 to 623 (RVIGDFGVPISILIMVLVDFF) traverse the membrane as a helical segment. The Extracellular segment spans residues 624–663 (IQDTYTQKLSVPDGFKVSNSSARGWVIHPLGLRSEFPIWM). An N-linked (GlcNAc...) (complex) asparagine glycan is attached at Asn642. The helical transmembrane segment at 664–684 (MFASALPALLVFILIFLESQI) threads the bilayer. The Cytoplasmic segment spans residues 685–700 (TTLIVSKPERKMVKGS). Residues 701 to 719 (GFHLDLLLVVGMGGVAALF) form a helical membrane-spanning segment. Residues 720–737 (GMPWLSATTVRSVTHANA) traverse the membrane as a discontinuously helical segment. A (Microbial infection) 5ABC region; interaction with P.falciparum (isolate 3D7) MSP9 region spans residues 720–761 (GMPWLSATTVRSVTHANALTVMGKASTPGAAAQIQEVKEQRI). Topologically, residues 738–760 (LTVMGKASTPGAAAQIQEVKEQR) are cytoplasmic. 2 helical membrane passes run 761-781 (ISGL…PILS) and 782-800 (RIPL…VTSL). At 801-838 (SGIQLFDRILLLFKPPKYHPDVPYVKRVKTWRMHLFTG) the chain is on the cytoplasmic side. The discontinuously helical intramembrane region spans 839 to 869 (IQIICLAVLWVVKSTPASLALPFVLILTVPL). Cys843 is lipidated: S-palmitoyl cysteine. Residues 870–911 (RRVLLPLIFRNVELQCLDADDAKATFDEEEGRDEYDEVAMPV) lie on the Cytoplasmic side of the membrane. Tyr904 is subject to Phosphotyrosine.

The protein belongs to the anion exchanger (TC 2.A.31) family. As to quaternary structure, a dimer in solution, but in its membrane environment, it exists primarily as a mixture of dimers and tetramers and spans the membrane asymmetrically. Component of the ankyrin-1 complex in the erythrocyte, composed of ANK1, RHCE, RHAG, SLC4A1, EPB42, GYPA, GYPB and AQP1. Interacts with STOM; this interaction positively regulates SLC4A1 activity. Interacts with GYPA; a GYPA monomer is bound at each end of the SLC4A1 dimer forming a heterotetramer. Three SLC4A1 dimers (Band 3-I, Band 3-II and Band 3-III) participates in the ankyrin-1 complex. Interacts (via the cytoplasmic domain) with EPB42; this interaction is mediated by the SLC4A1 Band 3-I dimer. Interacts (via the cytoplasmic domain) directly with ANK1; this interaction is mediated by the SLC4A1 Band 3-II and Band 3-III dimers. In terms of assembly, interacts with TMEM139. (Microbial infection) Interacts (via N-terminus) with P.falciparum (isolate K1) aldolase FBPA; the interaction inhibits FBPA catalytic activity. As to quaternary structure, (Microbial infection) Interacts (via the 5ABC region) with P.falciparum (isolate 3D7) MSP9/ABRA (via N-terminus). In terms of assembly, (Microbial infection) Interacts (via the 5ABC region) with P.falciparum (isolate 3D7) MSP1 p42 subunit. Phosphorylated on Tyr-8 and Tyr-21 most likely by SYK. PP1-resistant phosphorylation that precedes Tyr-359 and Tyr-904 phosphorylation. In terms of processing, phosphorylated on Tyr-359 and Tyr-904 most likely by LYN. PP1-inhibited phosphorylation that follows Tyr-8 and Tyr-21 phosphorylation. Post-translationally, N-glycosylated. In terms of tissue distribution, detected in erythrocytes (at protein level). Expressed in kidney (at protein level).

Its subcellular location is the cell membrane. The protein localises to the basolateral cell membrane. The enzyme catalyses hydrogencarbonate(in) + chloride(out) = hydrogencarbonate(out) + chloride(in). Its activity is regulated as follows. Phenyl isothiocyanate inhibits anion transport in vitro. Functionally, functions both as a transporter that mediates electroneutral anion exchange across the cell membrane and as a structural protein. Component of the ankyrin-1 complex of the erythrocyte membrane; required for normal flexibility and stability of the erythrocyte membrane and for normal erythrocyte shape via the interactions of its cytoplasmic domain with cytoskeletal proteins, glycolytic enzymes, and hemoglobin. Functions as a transporter that mediates the 1:1 exchange of inorganic anions across the erythrocyte membrane. Mediates chloride-bicarbonate exchange in the kidney, and is required for normal acidification of the urine. In terms of biological role, (Microbial infection) Acts as a receptor for P.falciparum (isolate 3D7) MSP9 and thus, facilitates merozoite invasion of erythrocytes. Acts as a receptor for P.falciparum (isolate 3D7) MSP1 and thus, facilitates merozoite invasion of erythrocytes. The polypeptide is Band 3 anion transport protein (Homo sapiens (Human)).